A 550-amino-acid chain; its full sequence is Hydroxylamine reductase (550 aa).

Residues cysteine 3, cysteine 6, cysteine 18, and cysteine 25 each contribute to the [2Fe-2S] cluster site. Histidine 249, glutamate 273, cysteine 317, cysteine 405, cysteine 433, cysteine 458, glutamate 492, and lysine 494 together coordinate hybrid [4Fe-2O-2S] cluster. Residue cysteine 405 is modified to Cysteine persulfide.

Belongs to the HCP family. Requires [2Fe-2S] cluster as cofactor. The cofactor is hybrid [4Fe-2O-2S] cluster.

The protein localises to the cytoplasm. It carries out the reaction A + NH4(+) + H2O = hydroxylamine + AH2 + H(+). In terms of biological role, catalyzes the reduction of hydroxylamine to form NH(3) and H(2)O. This Yersinia pseudotuberculosis serotype O:1b (strain IP 31758) protein is Hydroxylamine reductase.